Here is an 81-residue protein sequence, read N- to C-terminus: Photosystem I iron-sulfur center (81 aa).

4Fe-4S ferredoxin-type domains are found at residues 2 to 31 (AHSV…MIPW) and 39 to 68 (IASA…VRVY). Residues Cys-11, Cys-14, Cys-17, Cys-21, Cys-48, Cys-51, Cys-54, and Cys-58 each contribute to the [4Fe-4S] cluster site.

As to quaternary structure, the eukaryotic PSI reaction center is composed of at least 11 subunits. The cofactor is [4Fe-4S] cluster.

The protein resides in the plastid. It is found in the chloroplast thylakoid membrane. The enzyme catalyses reduced [plastocyanin] + hnu + oxidized [2Fe-2S]-[ferredoxin] = oxidized [plastocyanin] + reduced [2Fe-2S]-[ferredoxin]. Functionally, apoprotein for the two 4Fe-4S centers FA and FB of photosystem I (PSI); essential for photochemical activity. FB is the terminal electron acceptor of PSI, donating electrons to ferredoxin. The C-terminus interacts with PsaA/B/D and helps assemble the protein into the PSI complex. Required for binding of PsaD and PsaE to PSI. PSI is a plastocyanin-ferredoxin oxidoreductase, converting photonic excitation into a charge separation, which transfers an electron from the donor P700 chlorophyll pair to the spectroscopically characterized acceptors A0, A1, FX, FA and FB in turn. The sequence is that of Photosystem I iron-sulfur center from Cycas taitungensis (Prince sago).